The sequence spans 335 residues: Fructose-1,6-bisphosphatase class 1 (335 aa).

Positions 94, 113, 115, and 116 each coordinate Mg(2+). Substrate-binding positions include 116 to 119, N208, and K274; that span reads DGSS. Residue E280 participates in Mg(2+) binding.

The protein belongs to the FBPase class 1 family. In terms of assembly, homotetramer. The cofactor is Mg(2+).

It localises to the cytoplasm. It carries out the reaction beta-D-fructose 1,6-bisphosphate + H2O = beta-D-fructose 6-phosphate + phosphate. The protein operates within carbohydrate biosynthesis; gluconeogenesis. This chain is Fructose-1,6-bisphosphatase class 1, found in Polynucleobacter asymbioticus (strain DSM 18221 / CIP 109841 / QLW-P1DMWA-1) (Polynucleobacter necessarius subsp. asymbioticus).